Consider the following 553-residue polypeptide: Glutamate--tRNA ligase (553 aa).

The 'HIGH' region signature appears at 98–108; that stretch reads PNPSGPLHIGH.

It belongs to the class-I aminoacyl-tRNA synthetase family. Glutamate--tRNA ligase type 2 subfamily.

It is found in the cytoplasm. It catalyses the reaction tRNA(Glu) + L-glutamate + ATP = L-glutamyl-tRNA(Glu) + AMP + diphosphate. Its function is as follows. Catalyzes the attachment of glutamate to tRNA(Glu) in a two-step reaction: glutamate is first activated by ATP to form Glu-AMP and then transferred to the acceptor end of tRNA(Glu). This is Glutamate--tRNA ligase from Methanocaldococcus jannaschii (strain ATCC 43067 / DSM 2661 / JAL-1 / JCM 10045 / NBRC 100440) (Methanococcus jannaschii).